The following is a 167-amino-acid chain: Thiol peroxidase (167 aa).

The 150-residue stretch at 18-167 (VKVGDQAPDF…PIEAAKALVK (150 aa)) folds into the Thioredoxin domain. Cys60 acts as the Cysteine sulfenic acid (-SOH) intermediate in catalysis. Residues Cys60 and Cys94 are joined by a disulfide bond.

It belongs to the peroxiredoxin family. Tpx subfamily. As to quaternary structure, homodimer.

It catalyses the reaction a hydroperoxide + [thioredoxin]-dithiol = an alcohol + [thioredoxin]-disulfide + H2O. Thiol-specific peroxidase that catalyzes the reduction of hydrogen peroxide and organic hydroperoxides to water and alcohols, respectively. Plays a role in cell protection against oxidative stress by detoxifying peroxides. The chain is Thiol peroxidase from Bacillus subtilis (strain 168).